We begin with the raw amino-acid sequence, 98 residues long: Large ribosomal subunit protein uL23 (98 aa).

Belongs to the universal ribosomal protein uL23 family. In terms of assembly, part of the 50S ribosomal subunit. Contacts protein L29, and trigger factor when it is bound to the ribosome.

In terms of biological role, one of the early assembly proteins it binds 23S rRNA. One of the proteins that surrounds the polypeptide exit tunnel on the outside of the ribosome. Forms the main docking site for trigger factor binding to the ribosome. The chain is Large ribosomal subunit protein uL23 from Lactobacillus johnsonii (strain CNCM I-12250 / La1 / NCC 533).